The chain runs to 301 residues: Probable alpha-L-glutamate ligase (301 aa).

The ATP-grasp domain maps to 104-287; it reads MQLLSRRGIG…IAGMIVEFIE (184 aa). ATP is bound by residues Lys-141, 178–179, Asp-187, and 211–213; these read EY and RSN. Asp-248, Glu-260, and Asn-262 together coordinate Mg(2+). Residues Asp-248, Glu-260, and Asn-262 each contribute to the Mn(2+) site.

This sequence belongs to the RimK family. Mg(2+) serves as cofactor. It depends on Mn(2+) as a cofactor.

In Vibrio cholerae serotype O1 (strain ATCC 39541 / Classical Ogawa 395 / O395), this protein is Probable alpha-L-glutamate ligase.